The primary structure comprises 156 residues: Small ribosomal subunit protein uS7 (156 aa).

This sequence belongs to the universal ribosomal protein uS7 family. Part of the 30S ribosomal subunit. Contacts proteins S9 and S11.

In terms of biological role, one of the primary rRNA binding proteins, it binds directly to 16S rRNA where it nucleates assembly of the head domain of the 30S subunit. Is located at the subunit interface close to the decoding center, probably blocks exit of the E-site tRNA. The protein is Small ribosomal subunit protein uS7 of Sodalis glossinidius (strain morsitans).